The chain runs to 938 residues: Scm-like with four MBT domains protein 2 (938 aa).

Residues 1–32 (MERYLPVSKKRNSSSSLEKITGSANGNGTLYS) are disordered. Positions 13–30 (SSSSLEKITGSANGNGTL) are enriched in polar residues. MBT repeat units lie at residues 43–143 (FSWG…LRPP), 151–255 (SDWT…MDPP), 265–371 (FEWK…LAPP), and 379–475 (FNWV…LTTP). The tract at residues 742 to 836 (PEGIPESLPE…TVPTTASSNN (95 aa)) is disordered. Composition is skewed to basic and acidic residues over residues 765 to 777 (TEQEKRETLDTAR) and 809 to 822 (RNSEALKRPPVERA). An SAM domain is found at 868-931 (WSVTDVVRFI…CHQIERVKVA (64 aa)).

Interacts with YY1. Interacts with methylated histones H3K9me2 and H4K20me2. Expressed in testis and, at much lower levels, in ovary.

It is found in the nucleus. Transcriptional repressor of HOXB13 gene. In Mus musculus (Mouse), this protein is Scm-like with four MBT domains protein 2 (Sfmbt2).